The sequence spans 232 residues: Pyridoxal 5'-phosphate synthase subunit PdxS (232 aa).

Lysine 23 (schiff-base intermediate with D-ribose 5-phosphate) is an active-site residue. Glycine 95 is a D-ribose 5-phosphate binding site. Arginine 107 provides a ligand contact to D-glyceraldehyde 3-phosphate. Residues glycine 156 and 177–178 each bind D-ribose 5-phosphate; that span reads GS.

The protein belongs to the PdxS/SNZ family. In the presence of PdxT, forms a dodecamer of heterodimers.

It carries out the reaction aldehydo-D-ribose 5-phosphate + D-glyceraldehyde 3-phosphate + L-glutamine = pyridoxal 5'-phosphate + L-glutamate + phosphate + 3 H2O + H(+). Its pathway is cofactor biosynthesis; pyridoxal 5'-phosphate biosynthesis. Its function is as follows. Catalyzes the formation of pyridoxal 5'-phosphate from ribose 5-phosphate (RBP), glyceraldehyde 3-phosphate (G3P) and ammonia. The ammonia is provided by the PdxT subunit. Can also use ribulose 5-phosphate and dihydroxyacetone phosphate as substrates, resulting from enzyme-catalyzed isomerization of RBP and G3P, respectively. In Clostridium novyi, this protein is Pyridoxal 5'-phosphate synthase subunit PdxS.